The chain runs to 433 residues: MKTHYNLRVIAARAVAQVLDQGQSLGALLPPLQAPLSEKDRALLQELCFGIMRVLPQLEWLLRQLMAKPLTGKQRPVHYLLMVGLYQLTYTRIPPHAALAETVEGAVAMKRPQFKGLINGVLRQFQRQQPALLADAERQDIRHLHPSWLQKRILAAWPAQYAQIIDANNQRPPMWLRVNRLHHSRDAYLALLAGTDIAAVAHSQLPDAIRLEMPCNVGRLPGFDRGWVTVQDASAQGCALLLAPQNSETILDLCAAPGGKTTHILEIAPAARVMAVDVDGQRAARIHDNLQRLGMQAEVVIGDGRTPDAWRSGMLFDRILLDAPCSATGVIRRHPDIKWLRRDGDIAELAELQRQILCAAWRVLKLGGTLLYATCSILPEENRGQIAAFLADHPDALLQETGDAAAPGLQCLPVPTSGDGFFYAKMIKETQAC.

Residues 254 to 260, aspartate 277, aspartate 303, and aspartate 322 each bind S-adenosyl-L-methionine; that span reads CAAPGGK. Residue cysteine 375 is the Nucleophile of the active site.

It belongs to the class I-like SAM-binding methyltransferase superfamily. RsmB/NOP family.

The protein localises to the cytoplasm. The enzyme catalyses cytidine(967) in 16S rRNA + S-adenosyl-L-methionine = 5-methylcytidine(967) in 16S rRNA + S-adenosyl-L-homocysteine + H(+). Specifically methylates the cytosine at position 967 (m5C967) of 16S rRNA. The polypeptide is Ribosomal RNA small subunit methyltransferase B (Sodalis glossinidius (strain morsitans)).